We begin with the raw amino-acid sequence, 328 residues long: Ketol-acid reductoisomerase (NADP(+)) (328 aa).

In terms of domain architecture, KARI N-terminal Rossmann spans 1-179; the sequence is MRVLYERDGD…GGGAAGIIET (179 aa). NADP(+) is bound by residues 24–27, Arg-47, and Ser-51; that span reads YGSQ. His-106 is an active-site residue. Gly-132 contacts NADP(+). Residues 180-325 form the KARI C-terminal knotted domain; the sequence is TFVDETETDL…ARLRSRMTCA (146 aa). Asp-188, Glu-192, Glu-224, and Glu-228 together coordinate Mg(2+). Ser-249 lines the substrate pocket.

This sequence belongs to the ketol-acid reductoisomerase family. It depends on Mg(2+) as a cofactor.

It carries out the reaction (2R)-2,3-dihydroxy-3-methylbutanoate + NADP(+) = (2S)-2-acetolactate + NADPH + H(+). The enzyme catalyses (2R,3R)-2,3-dihydroxy-3-methylpentanoate + NADP(+) = (S)-2-ethyl-2-hydroxy-3-oxobutanoate + NADPH + H(+). The protein operates within amino-acid biosynthesis; L-isoleucine biosynthesis; L-isoleucine from 2-oxobutanoate: step 2/4. It functions in the pathway amino-acid biosynthesis; L-valine biosynthesis; L-valine from pyruvate: step 2/4. Involved in the biosynthesis of branched-chain amino acids (BCAA). Catalyzes an alkyl-migration followed by a ketol-acid reduction of (S)-2-acetolactate (S2AL) to yield (R)-2,3-dihydroxy-isovalerate. In the isomerase reaction, S2AL is rearranged via a Mg-dependent methyl migration to produce 3-hydroxy-3-methyl-2-ketobutyrate (HMKB). In the reductase reaction, this 2-ketoacid undergoes a metal-dependent reduction by NADPH to yield (R)-2,3-dihydroxy-isovalerate. This chain is Ketol-acid reductoisomerase (NADP(+)), found in Tremblaya princeps.